We begin with the raw amino-acid sequence, 407 residues long: Chorismate synthase (407 aa).

NADP(+) is bound by residues R40 and R46. FMN is bound by residues 135-137 (RAS), 256-257 (QA), G300, 315-319 (KPIST), and R341.

It belongs to the chorismate synthase family. In terms of assembly, homotetramer. The cofactor is FMNH2.

The enzyme catalyses 5-O-(1-carboxyvinyl)-3-phosphoshikimate = chorismate + phosphate. The protein operates within metabolic intermediate biosynthesis; chorismate biosynthesis; chorismate from D-erythrose 4-phosphate and phosphoenolpyruvate: step 7/7. Its function is as follows. Catalyzes the anti-1,4-elimination of the C-3 phosphate and the C-6 proR hydrogen from 5-enolpyruvylshikimate-3-phosphate (EPSP) to yield chorismate, which is the branch point compound that serves as the starting substrate for the three terminal pathways of aromatic amino acid biosynthesis. This reaction introduces a second double bond into the aromatic ring system. This chain is Chorismate synthase, found in Mycobacterium leprae (strain Br4923).